The chain runs to 134 residues: Early E3B 14.9 kDa protein (134 aa).

Residues 1 to 19 form the signal peptide; the sequence is MQAMLPVILILLLPCIALA. The chain crosses the membrane as a helical span at residues 54-78; that stretch reads YWIVIVGIINILSCTFFSITIYPTF.

It belongs to the adenoviridae E3_14 family. Post-translationally, phosphorylated on serine; O-glycosylated, but not N-glycosylated.

It is found in the host membrane. Its function is as follows. Down-regulates the EGF receptor and prevents cytolysis by TNF. This chain is Early E3B 14.9 kDa protein, found in Homo sapiens (Human).